The sequence spans 255 residues: H-2 class II histocompatibility antigen, E-D alpha chain (255 aa).

The signal sequence occupies residues 1-25; sequence MATIGALVLRFFFIAVLMSSQKSWA. An alpha-1 region spans residues 26 to 109; it reads IKEEHTIIQA…ERSNNTPDAN (84 aa). At 26 to 216 the chain is on the extracellular side; sequence IKEEHTIIQA…EKTLLPETKE (191 aa). The interval 110-203 is alpha-2; it reads VAPEVTVLSR…GLEEPLRKTW (94 aa). The Ig-like C1-type domain occupies 112–204; the sequence is PEVTVLSRSP…LEEPLRKTWE (93 aa). The cysteines at positions 132 and 188 are disulfide-linked. Asparagine 143 carries N-linked (GlcNAc...) asparagine glycosylation. Residues 204 to 216 are connecting peptide; that stretch reads EFEEKTLLPETKE. The chain crosses the membrane as a helical span at residues 217 to 242; sequence NVMCALGLFVGLVGIVVGIILIMKGI. Topologically, residues 243–255 are cytoplasmic; that stretch reads KKRNVVERRQGAL.

Belongs to the MHC class II family.

It localises to the membrane. This Mus musculus (Mouse) protein is H-2 class II histocompatibility antigen, E-D alpha chain (H2-Ea).